A 408-amino-acid chain; its full sequence is Two-pore potassium channel 5 (408 aa).

2 disordered regions span residues 1–29 (MEPL…SASI) and 58–82 (QSVQ…SQTR). Residues 15–29 (PIPENPSSSSSSASI) are compositionally biased toward low complexity. Residues 22-115 (SSSSSASITI…TKKPSPVSKS (94 aa)) are Stromal-facing. Positions 63 to 72 (DKEDQDSDSD) are enriched in acidic residues. A helical transmembrane segment spans residues 116-136 (IIRQAIFLLIVYLTLGVSIYS). The pore-forming intramembrane region spans 152-171 (DALYFCIVTMCTIGYGDIAP). Residues 178 to 198 (IFAVVFVLFGFGFLDILLSGV) form a helical membrane-spanning segment. Topologically, residues 199-248 (VNYVLDLQESMILTGIQTRQHHQHHHHHRFSAKDYIIDFEKGRMRIRMKV) are stromal. Residues 249–269 (CLALCVVVLCIGVGALVLHFV) form a helical membrane-spanning segment. The segment at residues 276–295 (DSVYLSVMSVTTVGYGDRAF) is an intramembrane region (pore-forming). The helical transmembrane segment at 302–322 (LFAAVWLLVSTLAVARAFLYL) threads the bilayer. The Stromal portion of the chain corresponds to 323–408 (AEARIDRRHR…TLPDLLGDPL (86 aa)). 2 EF-hand domains span residues 339–374 (LNRE…EMGK) and 378–408 (KDID…GDPL). The Ca(2+) site is built by aspartate 352, glutamate 363, aspartate 391, asparagine 393, lysine 397, and aspartate 402.

It belongs to the two pore domain potassium channel (TC 1.A.1.7) family. In terms of assembly, homodimer. In terms of tissue distribution, expressed in hydathodes and the vascular tissues of roots, stems, leaves and flowers.

It is found in the vacuole membrane. Its function is as follows. Probable voltage-independent potassium-selective tonoplast ion channel. The chain is Two-pore potassium channel 5 (TPK5) from Arabidopsis thaliana (Mouse-ear cress).